A 336-amino-acid chain; its full sequence is Glycerol-3-phosphate dehydrogenase [NAD(P)+] (336 aa).

NADPH contacts are provided by serine 11, tryptophan 12, arginine 32, and lysine 106. Sn-glycerol 3-phosphate contacts are provided by lysine 106 and glycine 136. Alanine 140 lines the NADPH pocket. Residues lysine 191, aspartate 244, serine 254, arginine 255, and asparagine 256 each coordinate sn-glycerol 3-phosphate. The active-site Proton acceptor is lysine 191. An NADPH-binding site is contributed by arginine 255. Residues valine 279 and glutamate 281 each contribute to the NADPH site.

The protein belongs to the NAD-dependent glycerol-3-phosphate dehydrogenase family.

The protein resides in the cytoplasm. The enzyme catalyses sn-glycerol 3-phosphate + NAD(+) = dihydroxyacetone phosphate + NADH + H(+). It carries out the reaction sn-glycerol 3-phosphate + NADP(+) = dihydroxyacetone phosphate + NADPH + H(+). The protein operates within membrane lipid metabolism; glycerophospholipid metabolism. Functionally, catalyzes the reduction of the glycolytic intermediate dihydroxyacetone phosphate (DHAP) to sn-glycerol 3-phosphate (G3P), the key precursor for phospholipid synthesis. This is Glycerol-3-phosphate dehydrogenase [NAD(P)+] from Frankia casuarinae (strain DSM 45818 / CECT 9043 / HFP020203 / CcI3).